We begin with the raw amino-acid sequence, 450 residues long: Tubulin alpha chain (450 aa).

Glutamine 11 contributes to the GTP binding site. An N6-acetyllysine modification is found at lysine 40. GTP-binding residues include glutamate 71, serine 140, glycine 144, threonine 145, threonine 179, asparagine 206, and asparagine 228. Residue glutamate 71 participates in Mg(2+) binding. Residue glutamate 254 is part of the active site.

This sequence belongs to the tubulin family. As to quaternary structure, dimer of alpha and beta chains. A typical microtubule is a hollow water-filled tube with an outer diameter of 25 nm and an inner diameter of 15 nM. Alpha-beta heterodimers associate head-to-tail to form protofilaments running lengthwise along the microtubule wall with the beta-tubulin subunit facing the microtubule plus end conferring a structural polarity. Microtubules usually have 13 protofilaments but different protofilament numbers can be found in some organisms and specialized cells. Mg(2+) is required as a cofactor. In terms of processing, acetylation of alpha chains at Lys-40 stabilizes microtubules and affects affinity and processivity of microtubule motors. This modification has a role in multiple cellular functions, ranging from cell motility, cell cycle progression or cell differentiation to intracellular trafficking and signaling.

The protein resides in the cytoplasm. It localises to the cytoskeleton. The catalysed reaction is GTP + H2O = GDP + phosphate + H(+). In terms of biological role, tubulin is the major constituent of microtubules, a cylinder consisting of laterally associated linear protofilaments composed of alpha- and beta-tubulin heterodimers. Microtubules grow by the addition of GTP-tubulin dimers to the microtubule end, where a stabilizing cap forms. Below the cap, tubulin dimers are in GDP-bound state, owing to GTPase activity of alpha-tubulin. This chain is Tubulin alpha chain, found in Euplotoides octocarinatus (Freshwater ciliate).